Here is a 150-residue protein sequence, read N- to C-terminus: UPF0178 protein BamMC406_1579 (150 aa).

It belongs to the UPF0178 family.

The polypeptide is UPF0178 protein BamMC406_1579 (Burkholderia ambifaria (strain MC40-6)).